The sequence spans 162 residues: Transcription elongation factor GreB (162 aa).

A coiled-coil region spans residues 52-76; it reads GKRRLREIDRRIRFLSKRLEALQII.

This sequence belongs to the GreA/GreB family. GreB subfamily.

Its function is as follows. Necessary for efficient RNA polymerase transcription elongation past template-encoded arresting sites. The arresting sites in DNA have the property of trapping a certain fraction of elongating RNA polymerases that pass through, resulting in locked ternary complexes. Cleavage of the nascent transcript by cleavage factors such as GreA or GreB allows the resumption of elongation from the new 3'terminus. GreB releases sequences of up to 9 nucleotides in length. This is Transcription elongation factor GreB from Haemophilus ducreyi (strain 35000HP / ATCC 700724).